The primary structure comprises 572 residues: Proline--tRNA ligase (572 aa).

Belongs to the class-II aminoacyl-tRNA synthetase family. ProS type 1 subfamily. In terms of assembly, homodimer.

The protein localises to the cytoplasm. The enzyme catalyses tRNA(Pro) + L-proline + ATP = L-prolyl-tRNA(Pro) + AMP + diphosphate. Its function is as follows. Catalyzes the attachment of proline to tRNA(Pro) in a two-step reaction: proline is first activated by ATP to form Pro-AMP and then transferred to the acceptor end of tRNA(Pro). As ProRS can inadvertently accommodate and process non-cognate amino acids such as alanine and cysteine, to avoid such errors it has two additional distinct editing activities against alanine. One activity is designated as 'pretransfer' editing and involves the tRNA(Pro)-independent hydrolysis of activated Ala-AMP. The other activity is designated 'posttransfer' editing and involves deacylation of mischarged Ala-tRNA(Pro). The misacylated Cys-tRNA(Pro) is not edited by ProRS. This Caldicellulosiruptor saccharolyticus (strain ATCC 43494 / DSM 8903 / Tp8T 6331) protein is Proline--tRNA ligase.